The primary structure comprises 141 residues: Putative pre-16S rRNA nuclease (141 aa).

Belongs to the YqgF nuclease family.

It localises to the cytoplasm. In terms of biological role, could be a nuclease involved in processing of the 5'-end of pre-16S rRNA. The protein is Putative pre-16S rRNA nuclease of Histophilus somni (strain 129Pt) (Haemophilus somnus).